We begin with the raw amino-acid sequence, 308 residues long: Cytochrome b (308 aa).

A run of 4 helical transmembrane segments spans residues 1 to 21, 45 to 66, 81 to 101, and 146 to 166; these read FGLLLGICLIVQIVTGLLLAA, WLIRNLHANGASFFFICIYLHI, WNIGVILLLTLMATAFVGYVX, and FFALHFLLPFVFAGLTLVHLT. Heme b-binding residues include His-51 and His-65. Heme b is bound by residues His-150 and His-164. Residue His-169 coordinates a ubiquinone. 3 helical membrane passes run 194-214, 256-276, and 288-308; these read TKDVLGFVLMLIPLITLALFS, LGGVLALAASVLVLFLIPFLH, and LSQILFWTLVANLLMLTWVSN.

It belongs to the cytochrome b family. As to quaternary structure, the cytochrome bc1 complex contains 11 subunits: 3 respiratory subunits (MT-CYB, CYC1 and UQCRFS1), 2 core proteins (UQCRC1 and UQCRC2) and 6 low-molecular weight proteins (UQCRH/QCR6, UQCRB/QCR7, UQCRQ/QCR8, UQCR10/QCR9, UQCR11/QCR10 and a cleavage product of UQCRFS1). This cytochrome bc1 complex then forms a dimer. The cofactor is heme b.

The protein localises to the mitochondrion inner membrane. Functionally, component of the ubiquinol-cytochrome c reductase complex (complex III or cytochrome b-c1 complex) that is part of the mitochondrial respiratory chain. The b-c1 complex mediates electron transfer from ubiquinol to cytochrome c. Contributes to the generation of a proton gradient across the mitochondrial membrane that is then used for ATP synthesis. The protein is Cytochrome b (MT-CYB) of Pomatostomus ruficeps (Chestnut-crowned babbler).